Consider the following 206-residue polypeptide: Ras-related protein Rab-18 (206 aa).

Residue methionine 1 is modified to N-acetylmethionine. GTP is bound by residues serine 17, glycine 20, lysine 21, serine 22, serine 23, aspartate 34, proline 35, threonine 40, glycine 66, lysine 123, and aspartate 125. Residue serine 22 coordinates Mg(2+). 2 short sequence motifs (switch) span residues 31–45 and 63–80; these read DTFD…GVDF and DTAG…YYRG. A Mg(2+)-binding site is contributed by threonine 40. Position 144 is a phosphoserine (serine 144). Position 152 (alanine 152) interacts with GTP. Cysteine 199 carries the S-palmitoyl cysteine lipid modification. Cysteine 203 carries the cysteine methyl ester modification. Cysteine 203 carries the S-geranylgeranyl cysteine lipid modification. A propeptide spans 204-206 (removed in mature form); that stretch reads SVL.

This sequence belongs to the small GTPase superfamily. Rab family. In terms of assembly, interacts (in GTP-bound form) with ZFYVE1. Interacts with ZW10 and this interaction is enhanced in the presence of ZFYVE1. Interacts with BSCL2. As to quaternary structure, (Microbial infection) Interacts with Hepatitis C virus (HCV) non-structural protein 5A; this interaction may promote the association of NS5A and other viral replicase components with lipid droplets. Requires Mg(2+) as cofactor. In terms of tissue distribution, ubiquitous.

Its subcellular location is the endoplasmic reticulum membrane. It is found in the golgi apparatus. It localises to the cis-Golgi network membrane. The protein localises to the lipid droplet. The protein resides in the apical cell membrane. The catalysed reaction is GTP + H2O = GDP + phosphate + H(+). With respect to regulation, regulated by guanine nucleotide exchange factor (GEF) RAB3GAP1-RAB3GAP2 complex at the cis-Golgi membrane which promotes the exchange of bound GDP for free GTP. Regulated by GTPase activating protein (GAP) TBC1D20 at the ER membrane which increases the GTP hydrolysis activity. Inhibited by GDP dissociation inhibitors (GDIs) which prevent Rab-GDP dissociation. Functionally, the small GTPases Rab are key regulators of intracellular membrane trafficking, from the formation of transport vesicles to their fusion with membranes. Rabs cycle between an inactive GDP-bound form and an active GTP-bound form that is able to recruit to membranes different sets of downstream effectors directly responsible for vesicle formation, movement, tethering and fusion. RAB18 is required for the localization of ZFYVE1 to lipid droplets and for its function in mediating the formation of endoplasmic reticulum-lipid droplets (ER-LD) contacts. Also required for maintaining endoplasmic reticulum structure. Plays a role in apical endocytosis/recycling. Plays a key role in eye and brain development and neurodegeneration. This is Ras-related protein Rab-18 from Homo sapiens (Human).